Here is a 239-residue protein sequence, read N- to C-terminus: Large ribosomal subunit protein uL1 (239 aa).

This sequence belongs to the universal ribosomal protein uL1 family. As to quaternary structure, part of the 50S ribosomal subunit.

Binds directly to 23S rRNA. The L1 stalk is quite mobile in the ribosome, and is involved in E site tRNA release. Functionally, protein L1 is also a translational repressor protein, it controls the translation of the L11 operon by binding to its mRNA. The sequence is that of Large ribosomal subunit protein uL1 from Rickettsia bellii (strain OSU 85-389).